A 335-amino-acid chain; its full sequence is Glycerol-3-phosphate dehydrogenase [NAD(P)+] (335 aa).

Tryptophan 11, arginine 30, and lysine 106 together coordinate NADPH. Residues lysine 106, glycine 135, and serine 137 each coordinate sn-glycerol 3-phosphate. An NADPH-binding site is contributed by alanine 139. Sn-glycerol 3-phosphate is bound by residues lysine 190, aspartate 243, serine 253, arginine 254, and asparagine 255. Lysine 190 (proton acceptor) is an active-site residue. Residue arginine 254 coordinates NADPH. NADPH is bound by residues valine 278 and glutamate 280.

This sequence belongs to the NAD-dependent glycerol-3-phosphate dehydrogenase family.

It localises to the cytoplasm. It catalyses the reaction sn-glycerol 3-phosphate + NAD(+) = dihydroxyacetone phosphate + NADH + H(+). It carries out the reaction sn-glycerol 3-phosphate + NADP(+) = dihydroxyacetone phosphate + NADPH + H(+). The protein operates within membrane lipid metabolism; glycerophospholipid metabolism. Functionally, catalyzes the reduction of the glycolytic intermediate dihydroxyacetone phosphate (DHAP) to sn-glycerol 3-phosphate (G3P), the key precursor for phospholipid synthesis. This is Glycerol-3-phosphate dehydrogenase [NAD(P)+] from Paucimonas lemoignei (Pseudomonas lemoignei).